Here is a 224-residue protein sequence, read N- to C-terminus: 7-cyano-7-deazaguanine synthase (224 aa).

10-20 (VSGGLDSATVL) contributes to the ATP binding site. Residues Cys-189, Cys-199, Cys-202, and Cys-205 each coordinate Zn(2+).

Belongs to the QueC family. Zn(2+) is required as a cofactor.

The catalysed reaction is 7-carboxy-7-deazaguanine + NH4(+) + ATP = 7-cyano-7-deazaguanine + ADP + phosphate + H2O + H(+). Its pathway is purine metabolism; 7-cyano-7-deazaguanine biosynthesis. In terms of biological role, catalyzes the ATP-dependent conversion of 7-carboxy-7-deazaguanine (CDG) to 7-cyano-7-deazaguanine (preQ(0)). The protein is 7-cyano-7-deazaguanine synthase of Nitrosococcus oceani (strain ATCC 19707 / BCRC 17464 / JCM 30415 / NCIMB 11848 / C-107).